We begin with the raw amino-acid sequence, 146 residues long: Large ribosomal subunit protein uL15 (146 aa).

The segment at 1-56 (MKLHELKAAEGANKASKRVGRGTGSGLGKTSGKGQNGQNSRSGGGVRPGFEGGQMP) is disordered. Composition is skewed to gly residues over residues 21–35 (RGTG…GKGQ) and 42–52 (SGGGVRPGFEG).

It belongs to the universal ribosomal protein uL15 family. Part of the 50S ribosomal subunit.

Its function is as follows. Binds to the 23S rRNA. This Clostridium botulinum (strain Langeland / NCTC 10281 / Type F) protein is Large ribosomal subunit protein uL15.